The following is an 833-amino-acid chain: RNA-binding protein 5-A (833 aa).

The tract at residues 1-87 (MGSDKRVSRS…GYHSDGDYMD (87 aa)) is disordered. The 81-residue stretch at 102 to 182 (KTIMLRGLPI…KTIAMHYSNP (81 aa)) folds into the RRM 1 domain. The RanBP2-type zinc finger occupies 185 to 214 (KFEDWLCNKCGLYNFRRRLKCFRCGAAKAE). Residues 241-325 (SAIILRNIGP…KTIGVDFAKS (85 aa)) enclose the RRM 2 domain. The segment covering 396-428 (TGAAEQGTAPQAESSSPVPATTSAVVCQSPQMY) has biased composition (polar residues). Disordered regions lie at residues 396-458 (TGAA…EEAA) and 523-559 (AADG…TAQQ). Residues 429-458 (QQPGSPTQSSTSTVAASATPASGTSAEEAA) are compositionally biased toward low complexity. A C2H2-type zinc finger spans residues 667 to 692 (LACLLCRRQFPNKDALTRHQQLSDLH). Residues 761-807 (NSNIGNKMLQAMGWKEGSGLGRKSQGITAPIQAQVRMRGAGLGAKGS) enclose the G-patch domain.

This sequence belongs to the RBM5/RBM10 family. Component of the spliceosome A complex (also known as the prespliceosome). Appears to dissociate from the spliceosome upon formation of the spliceosome B complex (also known as the precatalytic spliceosome), in which the heterotrimeric U4/U6.U5 snRNPs are bound.

The protein localises to the nucleus. In terms of biological role, component of the spliceosome A complex. Regulates alternative splicing of a number of mRNAs. May modulate splice site pairing after recruitment of the U1 and U2 snRNPs to the 5' and 3' splice sites of the intron. The protein is RNA-binding protein 5-A (rbm5-a) of Xenopus laevis (African clawed frog).